A 120-amino-acid polypeptide reads, in one-letter code: MERYRLPKTAFVRKGWEYDAVYRGGRRLHGVGFTIIYLLNSTENNRLGISVHRKLRGAVKRNRIKRIIRECFRLHRDIFPQKADIVFAVRPGFALSSPEQIRQAVGSLCGTPCGVCNEKA.

It belongs to the RnpA family. In terms of assembly, consists of a catalytic RNA component (M1 or rnpB) and a protein subunit.

The catalysed reaction is Endonucleolytic cleavage of RNA, removing 5'-extranucleotides from tRNA precursor.. In terms of biological role, RNaseP catalyzes the removal of the 5'-leader sequence from pre-tRNA to produce the mature 5'-terminus. It can also cleave other RNA substrates such as 4.5S RNA. The protein component plays an auxiliary but essential role in vivo by binding to the 5'-leader sequence and broadening the substrate specificity of the ribozyme. The chain is Ribonuclease P protein component from Desulfotalea psychrophila (strain LSv54 / DSM 12343).